Consider the following 795-residue polypeptide: Phenylalanine--tRNA ligase beta subunit (795 aa).

The tRNA-binding domain maps to 39–148 (AGTFNGVKVG…IDAPIGMDFR (110 aa)). The region spanning 401–476 (PKPNKVALRR…RIYGYDNIPN (76 aa)) is the B5 domain. Mg(2+)-binding residues include D454, D460, E463, and E464. The FDX-ACB domain occupies 701–794 (SKFPANRRDI…VSEKFGASLR (94 aa)).

The protein belongs to the phenylalanyl-tRNA synthetase beta subunit family. Type 1 subfamily. As to quaternary structure, tetramer of two alpha and two beta subunits. It depends on Mg(2+) as a cofactor.

It is found in the cytoplasm. The enzyme catalyses tRNA(Phe) + L-phenylalanine + ATP = L-phenylalanyl-tRNA(Phe) + AMP + diphosphate + H(+). This Vibrio vulnificus (strain YJ016) protein is Phenylalanine--tRNA ligase beta subunit.